We begin with the raw amino-acid sequence, 350 residues long: UDP-N-acetylenolpyruvoylglucosamine reductase (350 aa).

In terms of domain architecture, FAD-binding PCMH-type spans 24-195 (HVEATARWLL…VAVEFNLPLL (172 aa)). R172 is an active-site residue. The active-site Proton donor is S245. E342 is a catalytic residue.

Belongs to the MurB family. It depends on FAD as a cofactor.

Its subcellular location is the cytoplasm. It carries out the reaction UDP-N-acetyl-alpha-D-muramate + NADP(+) = UDP-N-acetyl-3-O-(1-carboxyvinyl)-alpha-D-glucosamine + NADPH + H(+). It participates in cell wall biogenesis; peptidoglycan biosynthesis. Cell wall formation. In Xanthomonas oryzae pv. oryzae (strain PXO99A), this protein is UDP-N-acetylenolpyruvoylglucosamine reductase.